Consider the following 1203-residue polypeptide: DNA-directed RNA polymerase subunit beta (1203 aa).

A compositionally biased stretch (basic and acidic residues) spans 1174-1195 (AAQEAKAAFEAEEAEKATKAEA). The disordered stretch occupies residues 1174–1203 (AAQEAKAAFEAEEAEKATKAEATEEAAEQE).

It belongs to the RNA polymerase beta chain family. The RNAP catalytic core consists of 2 alpha, 1 beta, 1 beta' and 1 omega subunit. When a sigma factor is associated with the core the holoenzyme is formed, which can initiate transcription.

The catalysed reaction is RNA(n) + a ribonucleoside 5'-triphosphate = RNA(n+1) + diphosphate. In terms of biological role, DNA-dependent RNA polymerase catalyzes the transcription of DNA into RNA using the four ribonucleoside triphosphates as substrates. The polypeptide is DNA-directed RNA polymerase subunit beta (Streptococcus pneumoniae serotype 19F (strain G54)).